The primary structure comprises 386 residues: GTPase Obg (386 aa).

Residues 4-162 (SNFVDYVKIY…RTVILQLKLL (159 aa)) enclose the Obg domain. Residues 18–44 (KGGRGSSHFRREKYIPKGGPDGGDGGR) are disordered. Positions 163–329 (ADVGLVGFPN…LKDLLWKELN (167 aa)) constitute an OBG-type G domain. Residues 169 to 176 (GFPNAGKS), 194 to 198 (FTTLE), 216 to 219 (DIPG), 283 to 286 (TKSD), and 310 to 312 (SSI) contribute to the GTP site. Mg(2+) contacts are provided by Ser-176 and Thr-196. The segment at 357–386 (YIFPVDEDEDDPDEEYEEYWDDDEDEDTRK) is disordered.

The protein belongs to the TRAFAC class OBG-HflX-like GTPase superfamily. OBG GTPase family. In terms of assembly, monomer. The cofactor is Mg(2+).

The protein resides in the cytoplasm. An essential GTPase which binds GTP, GDP and possibly (p)ppGpp with moderate affinity, with high nucleotide exchange rates and a fairly low GTP hydrolysis rate. Plays a role in control of the cell cycle, stress response, ribosome biogenesis and in those bacteria that undergo differentiation, in morphogenesis control. The protein is GTPase Obg of Parabacteroides distasonis (strain ATCC 8503 / DSM 20701 / CIP 104284 / JCM 5825 / NCTC 11152).